We begin with the raw amino-acid sequence, 261 residues long: Cytochrome c oxidase subunit 3 (261 aa).

At Met-1–Pro-15 the chain is on the mitochondrial matrix side. Residues Trp-16–Met-33 form a helical membrane-spanning segment. The Mitochondrial intermembrane segment spans residues Trp-34 to Asn-38. Residues Ser-39–Ile-62 form a helical membrane-spanning segment. The Mitochondrial matrix portion of the chain corresponds to Arg-63–Lys-77. A helical transmembrane segment spans residues Gly-78–Trp-99. Over Ala-100–Val-129 the chain is Mitochondrial intermembrane. Residues Pro-130 to Ser-150 form a helical membrane-spanning segment. The Mitochondrial matrix portion of the chain corresponds to Leu-151–Arg-156. Residues Asn-157–Ala-178 form a helical membrane-spanning segment. The Mitochondrial intermembrane segment spans residues Ser-179–Phe-198. A helical transmembrane segment spans residues Met-199–Lys-224. Residues Phe-225–His-232 are Mitochondrial matrix-facing. Residues Phe-233–Ser-255 traverse the membrane as a helical segment. The Mitochondrial intermembrane segment spans residues Ile-256–Ser-261.

This sequence belongs to the cytochrome c oxidase subunit 3 family. Component of the cytochrome c oxidase (complex IV, CIV), a multisubunit enzyme composed of 14 subunits. The complex is composed of a catalytic core of 3 subunits MT-CO1, MT-CO2 and MT-CO3, encoded in the mitochondrial DNA, and 11 supernumerary subunits COX4I, COX5A, COX5B, COX6A, COX6B, COX6C, COX7A, COX7B, COX7C, COX8 and NDUFA4, which are encoded in the nuclear genome. The complex exists as a monomer or a dimer and forms supercomplexes (SCs) in the inner mitochondrial membrane with NADH-ubiquinone oxidoreductase (complex I, CI) and ubiquinol-cytochrome c oxidoreductase (cytochrome b-c1 complex, complex III, CIII), resulting in different assemblies (supercomplex SCI(1)III(2)IV(1) and megacomplex MCI(2)III(2)IV(2)).

It localises to the mitochondrion inner membrane. It catalyses the reaction 4 Fe(II)-[cytochrome c] + O2 + 8 H(+)(in) = 4 Fe(III)-[cytochrome c] + 2 H2O + 4 H(+)(out). Component of the cytochrome c oxidase, the last enzyme in the mitochondrial electron transport chain which drives oxidative phosphorylation. The respiratory chain contains 3 multisubunit complexes succinate dehydrogenase (complex II, CII), ubiquinol-cytochrome c oxidoreductase (cytochrome b-c1 complex, complex III, CIII) and cytochrome c oxidase (complex IV, CIV), that cooperate to transfer electrons derived from NADH and succinate to molecular oxygen, creating an electrochemical gradient over the inner membrane that drives transmembrane transport and the ATP synthase. Cytochrome c oxidase is the component of the respiratory chain that catalyzes the reduction of oxygen to water. Electrons originating from reduced cytochrome c in the intermembrane space (IMS) are transferred via the dinuclear copper A center (CU(A)) of subunit 2 and heme A of subunit 1 to the active site in subunit 1, a binuclear center (BNC) formed by heme A3 and copper B (CU(B)). The BNC reduces molecular oxygen to 2 water molecules using 4 electrons from cytochrome c in the IMS and 4 protons from the mitochondrial matrix. The polypeptide is Cytochrome c oxidase subunit 3 (mt-Co3) (Mus musculus (Mouse)).